Consider the following 805-residue polypeptide: Leucine--tRNA ligase (805 aa).

Positions 40 to 51 (PYPSGSGLHVGH) match the 'HIGH' region motif. Positions 576–580 (KMSKS) match the 'KMSKS' region motif. K579 serves as a coordination point for ATP.

It belongs to the class-I aminoacyl-tRNA synthetase family.

It is found in the cytoplasm. It carries out the reaction tRNA(Leu) + L-leucine + ATP = L-leucyl-tRNA(Leu) + AMP + diphosphate. The chain is Leucine--tRNA ligase from Chlorobium luteolum (strain DSM 273 / BCRC 81028 / 2530) (Pelodictyon luteolum).